Consider the following 45-residue polypeptide: Enterotoxin (45 aa).

In terms of assembly, one of 3 components (of 35, 45 and 105 kDa) of the enterotoxin.

Functionally, one of 3 components required for cytotoxicity (tested in African green monkey Vero cells); the complex is not hemolytic. The chain is Enterotoxin from Bacillus cereus.